Consider the following 367-residue polypeptide: Histidinol-phosphate aminotransferase (367 aa).

Lys226 is modified (N6-(pyridoxal phosphate)lysine).

This sequence belongs to the class-II pyridoxal-phosphate-dependent aminotransferase family. Histidinol-phosphate aminotransferase subfamily. In terms of assembly, homodimer. The cofactor is pyridoxal 5'-phosphate.

It catalyses the reaction L-histidinol phosphate + 2-oxoglutarate = 3-(imidazol-4-yl)-2-oxopropyl phosphate + L-glutamate. It participates in amino-acid biosynthesis; L-histidine biosynthesis; L-histidine from 5-phospho-alpha-D-ribose 1-diphosphate: step 7/9. In Wolinella succinogenes (strain ATCC 29543 / DSM 1740 / CCUG 13145 / JCM 31913 / LMG 7466 / NCTC 11488 / FDC 602W) (Vibrio succinogenes), this protein is Histidinol-phosphate aminotransferase.